We begin with the raw amino-acid sequence, 250 residues long: Phosphoribosylaminoimidazole-succinocarboxamide synthase (250 aa).

Belongs to the SAICAR synthetase family.

It catalyses the reaction 5-amino-1-(5-phospho-D-ribosyl)imidazole-4-carboxylate + L-aspartate + ATP = (2S)-2-[5-amino-1-(5-phospho-beta-D-ribosyl)imidazole-4-carboxamido]succinate + ADP + phosphate + 2 H(+). Its pathway is purine metabolism; IMP biosynthesis via de novo pathway; 5-amino-1-(5-phospho-D-ribosyl)imidazole-4-carboxamide from 5-amino-1-(5-phospho-D-ribosyl)imidazole-4-carboxylate: step 1/2. The sequence is that of Phosphoribosylaminoimidazole-succinocarboxamide synthase from Synechococcus sp. (strain WH7803).